We begin with the raw amino-acid sequence, 171 residues long: MEIGQYQPNLEGDGLRIGIVQSRFNEPVCNGLADACVEELERLGVTGEDVLLVSVPGALEIPLALQKLAESGQFDALIALGAVIRGETYHFELVSNESGAGITRIGLDFNLPIANAVLTTENDEQAVARMTEKGRDAARVAVEMANLTMALDQLGDDEDEEEDEDDEEERA.

5-amino-6-(D-ribitylamino)uracil-binding positions include Phe24, 58–60, and 82–84; these read ALE and AVI. A (2S)-2-hydroxy-3-oxobutyl phosphate-binding site is contributed by 87-88; that stretch reads ET. Catalysis depends on His90, which acts as the Proton donor. 5-amino-6-(D-ribitylamino)uracil is bound at residue Asn115. Arg129 is a (2S)-2-hydroxy-3-oxobutyl phosphate binding site. Residues 150–171 are disordered; it reads ALDQLGDDEDEEEDEDDEEERA. Acidic residues predominate over residues 154 to 171; sequence LGDDEDEEEDEDDEEERA.

It belongs to the DMRL synthase family.

The catalysed reaction is (2S)-2-hydroxy-3-oxobutyl phosphate + 5-amino-6-(D-ribitylamino)uracil = 6,7-dimethyl-8-(1-D-ribityl)lumazine + phosphate + 2 H2O + H(+). It participates in cofactor biosynthesis; riboflavin biosynthesis; riboflavin from 2-hydroxy-3-oxobutyl phosphate and 5-amino-6-(D-ribitylamino)uracil: step 1/2. In terms of biological role, catalyzes the formation of 6,7-dimethyl-8-ribityllumazine by condensation of 5-amino-6-(D-ribitylamino)uracil with 3,4-dihydroxy-2-butanone 4-phosphate. This is the penultimate step in the biosynthesis of riboflavin. The sequence is that of 6,7-dimethyl-8-ribityllumazine synthase from Burkholderia cenocepacia (strain HI2424).